We begin with the raw amino-acid sequence, 173 residues long: Endoribonuclease YbeY (173 aa).

Residues His126, His130, and His136 each coordinate Zn(2+).

This sequence belongs to the endoribonuclease YbeY family. Requires Zn(2+) as cofactor.

It localises to the cytoplasm. In terms of biological role, single strand-specific metallo-endoribonuclease involved in late-stage 70S ribosome quality control and in maturation of the 3' terminus of the 16S rRNA. The protein is Endoribonuclease YbeY of Sinorhizobium fredii (strain NBRC 101917 / NGR234).